A 195-amino-acid chain; its full sequence is Dephospho-CoA kinase (195 aa).

The region spanning 2–195 (IIGLTGGIGV…DIVDSLSLSS (194 aa)) is the DPCK domain. Residue 10-15 (GVGKSF) participates in ATP binding.

This sequence belongs to the CoaE family.

It localises to the cytoplasm. The enzyme catalyses 3'-dephospho-CoA + ATP = ADP + CoA + H(+). It participates in cofactor biosynthesis; coenzyme A biosynthesis; CoA from (R)-pantothenate: step 5/5. Catalyzes the phosphorylation of the 3'-hydroxyl group of dephosphocoenzyme A to form coenzyme A. This is Dephospho-CoA kinase from Wolbachia sp. subsp. Brugia malayi (strain TRS).